A 340-amino-acid chain; its full sequence is MTKITVVGAGSWGTALAMVLADNGHDVRIWGNRSELMDEINTKHENSRYLPGITLPSTIVAYSSLEEALVDVNVVLLVVPTKAYREVLQDMKKYVAGPTTWIHASKGIEPGTSKRISEVIEEEIPEDLIKDVVVLSGPSHAEEVGLRQATTVTSAAKRMEAAEEVQDLFMNSYFRVYTNPDIVGVELGGALKNIIALAAGITDGLGLGDNAKAALMTRGLTEIARLGRKMGGNPLTFAGLTGMGDLIVTCTSVHSRNWRAGNLLGKGHSLEEVLESMGMVVEGVRTTKAAHELAEKMEVEMPITAALYDVLFNGNNVKDAVGSLMGRVRKHEVEAIPDLL.

The NADPH site is built by serine 11, tryptophan 12, arginine 33, and lysine 106. Residues lysine 106, glycine 137, and serine 139 each contribute to the sn-glycerol 3-phosphate site. An NADPH-binding site is contributed by alanine 141. Sn-glycerol 3-phosphate is bound by residues lysine 192, aspartate 245, serine 255, arginine 256, and asparagine 257. Lysine 192 acts as the Proton acceptor in catalysis. Arginine 256 serves as a coordination point for NADPH. NADPH-binding residues include valine 280 and glutamate 282.

Belongs to the NAD-dependent glycerol-3-phosphate dehydrogenase family.

It localises to the cytoplasm. The catalysed reaction is sn-glycerol 3-phosphate + NAD(+) = dihydroxyacetone phosphate + NADH + H(+). It carries out the reaction sn-glycerol 3-phosphate + NADP(+) = dihydroxyacetone phosphate + NADPH + H(+). It participates in membrane lipid metabolism; glycerophospholipid metabolism. Functionally, catalyzes the reduction of the glycolytic intermediate dihydroxyacetone phosphate (DHAP) to sn-glycerol 3-phosphate (G3P), the key precursor for phospholipid synthesis. The sequence is that of Glycerol-3-phosphate dehydrogenase [NAD(P)+] from Bacillus cereus (strain ATCC 10987 / NRS 248).